The primary structure comprises 370 residues: DNA replication and repair protein RecF (370 aa).

G30–T37 contributes to the ATP binding site.

This sequence belongs to the RecF family.

Its subcellular location is the cytoplasm. Functionally, the RecF protein is involved in DNA metabolism; it is required for DNA replication and normal SOS inducibility. RecF binds preferentially to single-stranded, linear DNA. It also seems to bind ATP. The chain is DNA replication and repair protein RecF from Staphylococcus aureus (strain USA300).